The chain runs to 473 residues: GDP-fucose protein O-fucosyltransferase 2 (473 aa).

The signal sequence occupies residues 1-25 (MKNMIYNLISISLYSLIIILTDIYA). Residues 59-63 (GEGFN), 283-285 (HLR), and 379-380 (RF) contribute to the GDP-beta-L-fucose site. E60 functions as the Proton acceptor in the catalytic mechanism.

This sequence belongs to the glycosyltransferase 68 family.

It is found in the endoplasmic reticulum. The catalysed reaction is L-seryl-[protein] + GDP-beta-L-fucose = 3-O-(alpha-L-fucosyl)-L-seryl-[protein] + GDP + H(+). It carries out the reaction L-threonyl-[protein] + GDP-beta-L-fucose = 3-O-(alpha-L-fucosyl)-L-threonyl-[protein] + GDP + H(+). It functions in the pathway protein modification; protein glycosylation. Functionally, catalyzes the reaction that attaches fucose through an O-glycosidic linkage to a conserved serine or threonine residue in the consensus sequence C1-X-X-S/T-C2 of thrombospondin type I repeats (TSRs) where C1 and C2 are the first and second cysteines of the repeat, respectively. O-fucosylates sporozoite proteins CSP and TRAP. O-fucosylation regulates stability and intracellular trafficking of TRAP but not of CSP. Dispensable for parasite transmission to the mosquito vector and/or infection of the vertebrate host hepatocytes. This is GDP-fucose protein O-fucosyltransferase 2 from Plasmodium berghei (strain Anka).